A 338-amino-acid chain; its full sequence is CRISPR-associated endonuclease Cas1 (338 aa).

Residues Glu-155, His-220, and Glu-235 each coordinate Mn(2+).

This sequence belongs to the CRISPR-associated endonuclease Cas1 family. As to quaternary structure, homodimer, forms a heterotetramer with a Cas2 homodimer. Requires Mg(2+) as cofactor. Mn(2+) is required as a cofactor.

Functionally, CRISPR (clustered regularly interspaced short palindromic repeat), is an adaptive immune system that provides protection against mobile genetic elements (viruses, transposable elements and conjugative plasmids). CRISPR clusters contain spacers, sequences complementary to antecedent mobile elements, and target invading nucleic acids. CRISPR clusters are transcribed and processed into CRISPR RNA (crRNA). Acts as a dsDNA endonuclease. Involved in the integration of spacer DNA into the CRISPR cassette. The type III-A Csm effector complex binds crRNA and acts as a crRNA-guided RNase, DNase and cyclic oligoadenylate synthase; binding of target RNA cognate to the crRNA is required for all activities. The chain is CRISPR-associated endonuclease Cas1 from Mycobacterium tuberculosis (strain CDC 1551 / Oshkosh).